Consider the following 254-residue polypeptide: Small ribosomal subunit protein eS1 (254 aa).

Ala2 bears the N-acetylalanine; partial mark.

This sequence belongs to the eukaryotic ribosomal protein eS1 family. Component of the small ribosomal subunit. Mature ribosomes consist of a small (40S) and a large (60S) subunit. The 40S subunit contains about 33 different proteins and 1 molecule of RNA (18S). The 60S subunit contains about 49 different proteins and 3 molecules of RNA (25S, 5.8S and 5S).

It is found in the cytoplasm. The polypeptide is Small ribosomal subunit protein eS1 (Zygosaccharomyces rouxii (strain ATCC 2623 / CBS 732 / NBRC 1130 / NCYC 568 / NRRL Y-229)).